A 129-amino-acid polypeptide reads, in one-letter code: Serum amyloid A-2 protein (129 aa).

The signal sequence occupies residues 1-18 (MKLFTGLIFCSLVLGVHS). Pyrrolidone carboxylic acid is present on Q19. A compositionally biased stretch (basic and acidic residues) spans 90-103 (KHGDSGHGVEDSRA). The interval 90–129 (KHGDSGHGVEDSRADQAANEWGRSGKDPNHFRPPGLPDKY) is disordered.

Belongs to the SAA family. As to quaternary structure, apolipoprotein of the HDL complex.

It localises to the secreted. Its function is as follows. Major acute phase reactant. The sequence is that of Serum amyloid A-2 protein from Sus scrofa (Pig).